Here is a 146-residue protein sequence, read N- to C-terminus: Angiogenin (146 aa).

The first 24 residues, 1-24 (MVMGLGLFLLVFMLGLGLTPPTLA), serve as a signal peptide directing secretion. Pyrrolidone carboxylic acid is present on Gln25. The Proton acceptor role is filled by His37. TRNA is bound at residue Arg45. Intrachain disulfides connect Cys50/Cys105, Cys63/Cys116, and Cys81/Cys131. Residues 55–59 (RRRGL) carry the Nucleolar localization signal motif. 2 residues coordinate tRNA: Cys105 and Ile127. His138 acts as the Proton donor in catalysis.

Belongs to the pancreatic ribonuclease family. Homodimer. Interacts with RNH1; inhibiting ANG ribonuclease activity. Interacts with PCNA.

The protein resides in the secreted. It is found in the nucleus. Its subcellular location is the nucleolus. The protein localises to the cytoplasm. It localises to the stress granule. Its activity is regulated as follows. Has weak tRNA ribonuclease activity by itself due to partial autoinhibition by its C-terminus, which folds into a short alpha-helix that partially occludes the substrate-binding site. In absence of stress, the ribonuclease activity is inhibited by RNH1 in the cytoplasm. In response to stress, dissociates from RNH1 in the cytoplasm and associates with cytoplasmic ribosomes with vacant A-sites: ribosomes directly activate the tRNA ribonuclease activity of ANG by refolding the C-terminal alpha-helix. In response to stress, the angiogenic activity of ANG is inhibited by RNH1 in the nucleus. Secreted ribonuclease that can either promote or restrict cell proliferation of target cells, depending on the context. Endocytosed in target cells via its receptor PLXNB2 and translocates to the cytoplasm or nucleus. Under stress conditions, localizes to the cytoplasm and promotes the assembly of stress granules (SGs): specifically cleaves a subset of tRNAs within anticodon loops to produce tRNA-derived stress-induced fragments (tiRNAs), resulting in translation repression and inhibition of cell proliferation. tiRNas also prevent formation of apoptosome, thereby promoting cell survival. Preferentially cleaves RNAs between a pyrimidine and an adenosine residue, suggesting that it cleaves the anticodon loop of tRNA(Ala) (32-UUAGCAU-38) after positions 33 and 36. Cleaves a subset of tRNAs, including tRNA(Ala), tRNA(Glu), tRNA(Gly), tRNA(Lys), tRNA(Val), tRNA(His), tRNA(Asp) and tRNA(Sec). Under growth conditions and in differentiated cells, translocates to the nucleus and stimulates ribosomal RNA (rRNA) transcription, including that containing the initiation site sequences of 45S rRNA, thereby promoting cell growth and proliferation. Angiogenin induces vascularization of normal and malignant tissues via its ability to promote rRNA transcription. Involved in hematopoietic stem and progenitor cell (HSPC) growth and survival by promoting rRNA transcription in growth conditions and inhibiting translation in response to stress, respectively. Mediates the crosstalk between myeloid and intestinal epithelial cells to protect the intestinal epithelial barrier integrity: secreted by myeloid cells and promotes intestinal epithelial cells proliferation and survival. Also mediates osteoclast-endothelial cell crosstalk in growing bone: produced by osteoclasts and protects the neighboring vascular cells against senescence by promoting rRNA transcription. The chain is Angiogenin (ANG) from Trachypithecus francoisi (Francois' leaf monkey).